Reading from the N-terminus, the 675-residue chain is Metal-nicotianamine transporter YSL3 (675 aa).

Helical transmembrane passes span 42–62 (ITFR…VIVM), 66–86 (LTTG…FVFL), 114–134 (CAVA…LLGL), 159–179 (GIGW…LALV), 219–239 (VFGF…QWFF), 280–300 (IVNI…WPLI), 325–345 (VFIS…KILF), 386–406 (IPLW…IIAI), 408–428 (IMFP…APSL), 450–470 (VALF…AGLV), 504–524 (VSQA…FFLF), 556–576 (FSAL…FAVA), 602–622 (FLVG…VFAW), and 630–650 (AGLM…LWIL).

It belongs to the YSL (TC 2.A.67.2) family. As to expression, expressed in leaves, anthers and pollen grains. Restricted to the vasculature.

The protein resides in the membrane. May be involved in the lateral transport of nicotianamine-chelated metals in the vasculature. The chain is Metal-nicotianamine transporter YSL3 (YSL3) from Arabidopsis thaliana (Mouse-ear cress).